The chain runs to 319 residues: Aspartate carbamoyltransferase catalytic subunit (319 aa).

Carbamoyl phosphate contacts are provided by Arg64 and Thr65. Lys92 lines the L-aspartate pocket. Arg114, His142, and Gln145 together coordinate carbamoyl phosphate. The L-aspartate site is built by Arg175 and Arg229. Positions 270 and 271 each coordinate carbamoyl phosphate.

The protein belongs to the aspartate/ornithine carbamoyltransferase superfamily. ATCase family. As to quaternary structure, heterododecamer (2C3:3R2) of six catalytic PyrB chains organized as two trimers (C3), and six regulatory PyrI chains organized as three dimers (R2).

It carries out the reaction carbamoyl phosphate + L-aspartate = N-carbamoyl-L-aspartate + phosphate + H(+). It participates in pyrimidine metabolism; UMP biosynthesis via de novo pathway; (S)-dihydroorotate from bicarbonate: step 2/3. In terms of biological role, catalyzes the condensation of carbamoyl phosphate and aspartate to form carbamoyl aspartate and inorganic phosphate, the committed step in the de novo pyrimidine nucleotide biosynthesis pathway. The protein is Aspartate carbamoyltransferase catalytic subunit of Rhodospirillum rubrum (strain ATCC 11170 / ATH 1.1.1 / DSM 467 / LMG 4362 / NCIMB 8255 / S1).